The sequence spans 100 residues: Gas vesicle protein J (100 aa).

The protein belongs to the gas vesicle GvpA family. As to quaternary structure, interacts with GvpA.

It is found in the gas vesicle. A minor component of the gas vesicle, might be involved in nucleating gas vesicle formation. This protein could be important for the shape determination of the gas vesicle. Gas vesicles (GV) are hollow, gas filled proteinaceous nanostructures. During planktonic growth they allow positioning of the organism at a favorable depth for light or nutrient acquisition. Functionally, when a minimal gvp locus (gvpA2-gvpR-gvpN-gvpF-gvpG-gvpL-gvpS-gvpK-gvpJ-gvpT-gvpU, called pNL29) is expressed in E.coli gas vesicles are made. In Priestia megaterium (Bacillus megaterium), this protein is Gas vesicle protein J.